The following is a 176-amino-acid chain: Shikimate kinase (176 aa).

14–19 (GAGKST) serves as a coordination point for ATP. Serine 18 is a binding site for Mg(2+). Substrate-binding residues include aspartate 36, arginine 60, and glycine 83. An ATP-binding site is contributed by arginine 121. Position 140 (arginine 140) interacts with substrate.

Belongs to the shikimate kinase family. In terms of assembly, monomer. Mg(2+) serves as cofactor.

The protein resides in the cytoplasm. The enzyme catalyses shikimate + ATP = 3-phosphoshikimate + ADP + H(+). The protein operates within metabolic intermediate biosynthesis; chorismate biosynthesis; chorismate from D-erythrose 4-phosphate and phosphoenolpyruvate: step 5/7. In terms of biological role, catalyzes the specific phosphorylation of the 3-hydroxyl group of shikimic acid using ATP as a cosubstrate. In Francisella tularensis subsp. tularensis (strain FSC 198), this protein is Shikimate kinase.